Reading from the N-terminus, the 301-residue chain is Runt-related transcription factor rnt-1 (301 aa).

The Runt domain occupies 10-138 (NFIEQQPAPA…TVDGPRDARI (129 aa)). Interaction with DNA regions lie at residues 40-44 (RSNKS), 95-103 (RFVGRSGRG), and 128-137 (VTVDGPRDAR). 2 residues coordinate chloride: arginine 99 and valine 130. The segment at 237 to 301 (PSIFITPTSD…SSSPTIWRPF (65 aa)) is disordered. Position 255 is a phosphoserine (serine 255). Residues 255 to 276 (SPRSITKSSETSINLIQETPES) show a composition bias toward polar residues. Low complexity predominate over residues 285–301 (VSITSSNSSSPTIWRPF).

As to quaternary structure, interacts with CBFbeta homolog bro-1; acts to increase the affinity and specificity of interaction of rnt-1 with DNA. Interacts with TGF-beta pathway protein sma-4. May be ubiquitinated in order to be targeted for proteasome-mediated degradation in intestinal cells. In terms of processing, may be phosphorylated by members of the p38 MAP kinase pathway. As to expression, expressed in the intestine.

Its subcellular location is the nucleus. Functionally, transcription factor. Binds to regulatory DNA sequences in order to modulate transcription; negatively autoregulates its own expression, perhaps dependent upon CBF beta homolog bro-1. Promotes proliferation, and prevents differentiation, of seam cells, a stem cell-like lineage, acting in concert with bro-1. Required for controlling cell proliferation in the seam cells, perhaps by repressing expression of cyclin-dependent kinase inhibitor cki-1. Inhibition of seam cell differentiation is regulated by rnt-1 and bro-1, perhaps acting upstream of pop-1, by antagonizing pop-1 repressor function. Required for asymmetrical cell divisions in the lineage derived from a posterior embryonic seam cell, the T blast cell, and for asymmetric expression of zinc finger protein tlp-1. Regulates growth and male tail development. Involved in the oxidative stress response, perhaps downstream of the p38 MAP kinase pathway, and acting as part of a negative feedback loop via a transcriptional target gene, tyrosine-protein phosphatase vhp-1. Positively modulates dopaminergic signaling in a non-cell autonomous manner. May be involved in TGF-beta signaling. The chain is Runt-related transcription factor rnt-1 from Caenorhabditis elegans.